A 311-amino-acid chain; its full sequence is tRNA-cytidine(32) 2-sulfurtransferase (311 aa).

Positions 47-52 (SGGKDS) match the PP-loop motif motif. [4Fe-4S] cluster contacts are provided by Cys122, Cys125, and Cys213.

It belongs to the TtcA family. Homodimer. Mg(2+) serves as cofactor. The cofactor is [4Fe-4S] cluster.

The protein localises to the cytoplasm. It catalyses the reaction cytidine(32) in tRNA + S-sulfanyl-L-cysteinyl-[cysteine desulfurase] + AH2 + ATP = 2-thiocytidine(32) in tRNA + L-cysteinyl-[cysteine desulfurase] + A + AMP + diphosphate + H(+). The protein operates within tRNA modification. Its function is as follows. Catalyzes the ATP-dependent 2-thiolation of cytidine in position 32 of tRNA, to form 2-thiocytidine (s(2)C32). The sulfur atoms are provided by the cysteine/cysteine desulfurase (IscS) system. The sequence is that of tRNA-cytidine(32) 2-sulfurtransferase from Shigella boydii serotype 4 (strain Sb227).